A 347-amino-acid polypeptide reads, in one-letter code: Fructose-1,6-bisphosphatase class 1 2 (347 aa).

4 residues coordinate Mg(2+): E92, D111, L113, and D114. Substrate is bound by residues 114–117 and N202; that span reads DGSS. E274 is a binding site for Mg(2+).

It belongs to the FBPase class 1 family. As to quaternary structure, homotetramer. Requires Mg(2+) as cofactor.

It localises to the cytoplasm. It carries out the reaction beta-D-fructose 1,6-bisphosphate + H2O = beta-D-fructose 6-phosphate + phosphate. It participates in carbohydrate biosynthesis; Calvin cycle. This Bradyrhizobium sp. (strain BTAi1 / ATCC BAA-1182) protein is Fructose-1,6-bisphosphatase class 1 2.